The chain runs to 63 residues: Large ribosomal subunit protein bL32c (63 aa).

A disordered region spans residues 38–63 (RSFSGVSEHPKPKGFSRQQTNNRVLG). The segment covering 53–63 (SRQQTNNRVLG) has biased composition (polar residues).

It belongs to the bacterial ribosomal protein bL32 family.

The protein resides in the plastid. It localises to the chloroplast. The sequence is that of Large ribosomal subunit protein bL32c (rpl32) from Oryza sativa (Rice).